We begin with the raw amino-acid sequence, 131 residues long: Ribonuclease P protein component (131 aa).

The protein belongs to the RnpA family. In terms of assembly, consists of a catalytic RNA component (M1 or rnpB) and a protein subunit.

It catalyses the reaction Endonucleolytic cleavage of RNA, removing 5'-extranucleotides from tRNA precursor.. Its function is as follows. RNaseP catalyzes the removal of the 5'-leader sequence from pre-tRNA to produce the mature 5'-terminus. It can also cleave other RNA substrates such as 4.5S RNA. The protein component plays an auxiliary but essential role in vivo by binding to the 5'-leader sequence and broadening the substrate specificity of the ribozyme. This chain is Ribonuclease P protein component, found in Stutzerimonas stutzeri (strain A1501) (Pseudomonas stutzeri).